The following is a 134-amino-acid chain: ATP synthase epsilon chain (134 aa).

The protein belongs to the ATPase epsilon chain family. As to quaternary structure, F-type ATPases have 2 components, CF(1) - the catalytic core - and CF(0) - the membrane proton channel. CF(1) has five subunits: alpha(3), beta(3), gamma(1), delta(1), epsilon(1). CF(0) has three main subunits: a, b and c.

The protein localises to the cell membrane. Functionally, produces ATP from ADP in the presence of a proton gradient across the membrane. In Listeria innocua serovar 6a (strain ATCC BAA-680 / CLIP 11262), this protein is ATP synthase epsilon chain.